The following is a 371-amino-acid chain: MKKRKTVKKRYVIALVIVIAGLITLWRILNAPVPTYQTLIVRPGDLQQSVLATGKLDALRKVDVGAQVSGQLKTLSVAIGDKVKKDQLLGVIDPEQAENQIKEVEATLMELRAQRQQAEAELKLARVTYSRQQRLAQTQAVSLQDLDTAATEMAVKQAQIGTIDAQIKRNQASLDTAKTNLDYTRIVAPMAGEVTQITTLQGQTVIAAQQAPNILTLADMSTMLVKAQVSEADVIHLKPGQKAWFTVLGDPLTRYEGQIKDVLPTPEKVNDAIFYYARFEVPNPNGLLRLDMTAQVHIQLTDVKNVLTIPLSALGDPVGDNRYKVKLLRNGETREREVTIGARNDTDVEIVKGLEAGDEVVIGEAKPGAAQ.

Over 1–10 (MKKRKTVKKR) the chain is Cytoplasmic. A helical membrane pass occupies residues 11–31 (YVIALVIVIAGLITLWRILNA). Topologically, residues 32-371 (PVPTYQTLIV…IGEAKPGAAQ (340 aa)) are periplasmic. The stretch at 92-137 (IDPEQAENQIKEVEATLMELRAQRQQAEAELKLARVTYSRQQRLAQ) forms a coiled coil.

This sequence belongs to the membrane fusion protein (MFP) (TC 8.A.1) family. As to quaternary structure, homohexamer. Part of the tripartite efflux system MacAB-TolC, which is composed of an inner membrane transporter, MacB, a periplasmic membrane fusion protein, MacA, and an outer membrane component, TolC. The complex forms a large protein conduit and can translocate molecules across both the inner and outer membranes. MacA interacts with MacB and TolC.

Its subcellular location is the cell inner membrane. In terms of biological role, part of the tripartite efflux system MacAB-TolC. MacA stimulates the ATPase activity of MacB by promoting the closed ATP-bound state of MacB, increases the capacity of MacB to bind macrolides such as erythromycin, and provides a physical link between MacB and TolC. Confers resistance against macrolides. This chain is Macrolide export protein MacA (macA), found in Escherichia coli O157:H7.